The following is a 317-amino-acid chain: Ribosomal protein L11 methyltransferase (317 aa).

T158, G179, D201, and N244 together coordinate S-adenosyl-L-methionine.

It belongs to the methyltransferase superfamily. PrmA family.

Its subcellular location is the cytoplasm. It carries out the reaction L-lysyl-[protein] + 3 S-adenosyl-L-methionine = N(6),N(6),N(6)-trimethyl-L-lysyl-[protein] + 3 S-adenosyl-L-homocysteine + 3 H(+). Its function is as follows. Methylates ribosomal protein L11. The polypeptide is Ribosomal protein L11 methyltransferase (Streptococcus uberis (strain ATCC BAA-854 / 0140J)).